The primary structure comprises 251 residues: 3-deoxy-manno-octulosonate cytidylyltransferase (251 aa).

The protein belongs to the KdsB family.

It localises to the cytoplasm. It carries out the reaction 3-deoxy-alpha-D-manno-oct-2-ulosonate + CTP = CMP-3-deoxy-beta-D-manno-octulosonate + diphosphate. It functions in the pathway nucleotide-sugar biosynthesis; CMP-3-deoxy-D-manno-octulosonate biosynthesis; CMP-3-deoxy-D-manno-octulosonate from 3-deoxy-D-manno-octulosonate and CTP: step 1/1. Its pathway is bacterial outer membrane biogenesis; lipopolysaccharide biosynthesis. Functionally, activates KDO (a required 8-carbon sugar) for incorporation into bacterial lipopolysaccharide in Gram-negative bacteria. This chain is 3-deoxy-manno-octulosonate cytidylyltransferase, found in Brucella canis (strain ATCC 23365 / NCTC 10854 / RM-666).